The chain runs to 273 residues: 4-diphosphocytidyl-2-C-methyl-D-erythritol kinase (273 aa).

Lys-9 is an active-site residue. 90–100 contributes to the ATP binding site; sequence PVAAGLGGGSA. Asp-129 is a catalytic residue.

This sequence belongs to the GHMP kinase family. IspE subfamily.

The catalysed reaction is 4-CDP-2-C-methyl-D-erythritol + ATP = 4-CDP-2-C-methyl-D-erythritol 2-phosphate + ADP + H(+). It functions in the pathway isoprenoid biosynthesis; isopentenyl diphosphate biosynthesis via DXP pathway; isopentenyl diphosphate from 1-deoxy-D-xylulose 5-phosphate: step 3/6. Its function is as follows. Catalyzes the phosphorylation of the position 2 hydroxy group of 4-diphosphocytidyl-2C-methyl-D-erythritol. This is 4-diphosphocytidyl-2-C-methyl-D-erythritol kinase from Erythrobacter litoralis (strain HTCC2594).